Here is a 21-residue protein sequence, read N- to C-terminus: Formate ester dehydrogenase beta chain (21 aa).

As to quaternary structure, heterotrimer composed of an alpha, a beta and a gamma chain.

In Amycolatopsis methanolica, this protein is Formate ester dehydrogenase beta chain.